The sequence spans 462 residues: Transcript termination protein A18 (462 aa).

Residues 99-255 (KCKEKRPLYT…NSIINFIKFS (157 aa)) enclose the Helicase ATP-binding domain. Residue 112–119 (LACGFGKT) participates in ATP binding. Residues 205–208 (DEAH) carry the DEAH box motif. The 152-residue stretch at 308-459 (IVDKIIETFK…ATKLGFREVS (152 aa)) folds into the Helicase C-terminal domain.

This sequence belongs to the helicase family. Poxviruses subfamily. Interacts with G2. Might be part of a transcription complex composed at least of G2, A18, and H5.

Its subcellular location is the virion. DNA helicase which seems to act as a postreplicative transcription termination factor. Involved in ATP-dependent release of nascent RNA. Forms a stable complex with single-stranded DNA, and to a lesser extent RNA. The protein is Transcript termination protein A18 of Vertebrata (FPV).